A 294-amino-acid polypeptide reads, in one-letter code: 4-hydroxy-tetrahydrodipicolinate synthase (294 aa).

Pyruvate is bound at residue threonine 47. Tyrosine 135 functions as the Proton donor/acceptor in the catalytic mechanism. Catalysis depends on lysine 163, which acts as the Schiff-base intermediate with substrate. Pyruvate is bound at residue isoleucine 206.

The protein belongs to the DapA family. In terms of assembly, homodimer.

It localises to the cytoplasm. It catalyses the reaction L-aspartate 4-semialdehyde + pyruvate = (2S,4S)-4-hydroxy-2,3,4,5-tetrahydrodipicolinate + H2O + H(+). Its pathway is amino-acid biosynthesis; L-lysine biosynthesis via DAP pathway; (S)-tetrahydrodipicolinate from L-aspartate: step 3/4. In terms of biological role, catalyzes the condensation of (S)-aspartate-beta-semialdehyde [(S)-ASA] and pyruvate to 4-hydroxy-tetrahydrodipicolinate (HTPA). This chain is 4-hydroxy-tetrahydrodipicolinate synthase, found in Staphylococcus carnosus (strain TM300).